We begin with the raw amino-acid sequence, 334 residues long: Fructose-1,6-bisphosphatase class 1 (334 aa).

Residues Glu90, Asp113, Leu115, and Asp116 each contribute to the Mg(2+) site. Substrate-binding positions include Asp116–Ser119, Asn209, Tyr242, and Lys272. Glu278 serves as a coordination point for Mg(2+).

The protein belongs to the FBPase class 1 family. In terms of assembly, homotetramer. Mg(2+) is required as a cofactor.

It localises to the cytoplasm. It catalyses the reaction beta-D-fructose 1,6-bisphosphate + H2O = beta-D-fructose 6-phosphate + phosphate. It participates in carbohydrate biosynthesis; gluconeogenesis. The sequence is that of Fructose-1,6-bisphosphatase class 1 from Actinobacillus succinogenes (strain ATCC 55618 / DSM 22257 / CCUG 43843 / 130Z).